Reading from the N-terminus, the 250-residue chain is 5-oxoprolinase subunit A (250 aa).

It belongs to the LamB/PxpA family. Forms a complex composed of PxpA, PxpB and PxpC.

It catalyses the reaction 5-oxo-L-proline + ATP + 2 H2O = L-glutamate + ADP + phosphate + H(+). In terms of biological role, catalyzes the cleavage of 5-oxoproline to form L-glutamate coupled to the hydrolysis of ATP to ADP and inorganic phosphate. This is 5-oxoprolinase subunit A from Paraburkholderia phytofirmans (strain DSM 17436 / LMG 22146 / PsJN) (Burkholderia phytofirmans).